A 142-amino-acid polypeptide reads, in one-letter code: Large ribosomal subunit protein uL11 (142 aa).

Belongs to the universal ribosomal protein uL11 family. In terms of assembly, part of the ribosomal stalk of the 50S ribosomal subunit. Interacts with L10 and the large rRNA to form the base of the stalk. L10 forms an elongated spine to which L12 dimers bind in a sequential fashion forming a multimeric L10(L12)X complex. In terms of processing, one or more lysine residues are methylated.

Forms part of the ribosomal stalk which helps the ribosome interact with GTP-bound translation factors. The polypeptide is Large ribosomal subunit protein uL11 (Haemophilus influenzae (strain 86-028NP)).